The primary structure comprises 252 residues: Acyl-coenzyme A diphosphatase FITM2 (252 aa).

The Cytoplasmic segment spans residues 1–25 (MAAAVAGSLVDKLVCLWRQPYTRIY). Residues 26–46 (LPHLFFCISLVGSVLKNAELV) form a helical membrane-spanning segment. Over 47 to 59 (PESYFSSSRNVLN) the chain is Lumenal. Residues 60-80 (LYFVKVSWGWTIVLLLPFIAY) traverse the membrane as a helical segment. Over 81-94 (SNFYIKSHMFALRR) the chain is Cytoplasmic. A helical transmembrane segment spans residues 95-115 (LTSLLVATLVWYICTETFFYI). Over 116-156 (EDITGSCYESNTMVVIRGEFDTKAACRKAGFFWDGFDISGH) the chain is Lumenal. Histidine 156 is a catalytic residue. The helical transmembrane segment at 157-177 (SFILSYSSLVIMEEMVPMLHI) threads the bilayer. The Cytoplasmic segment spans residues 178-190 (QPAYRNPPLDCLY). Residues 191-211 (LALNVIVAIWIWMFGCTSVYF) traverse the membrane as a helical segment. Residue histidine 212 is part of the active site. Residues 212-223 (HDIIDKILGTSC) are Lumenal-facing. A helical membrane pass occupies residues 224 to 244 (GILGWYMTYKVWYVKLFSPGL). The Cytoplasmic portion of the chain corresponds to 245 to 252 (PPQPKQHT).

It belongs to the FIT family. FIT2 subfamily. Widely expressed.

Its subcellular location is the endoplasmic reticulum membrane. It carries out the reaction an acyl-CoA + H2O = an acyl-4'-phosphopantetheine + adenosine 3',5'-bisphosphate + 2 H(+). Its function is as follows. Fatty acyl-coenzyme A (CoA) diphosphatase that hydrolyzes fatty acyl-CoA to yield acyl-4'-phosphopantetheine and adenosine 3',5'-bisphosphate. Preferentially hydrolyzes unsaturated long-chain acyl-CoA substrates in the endoplasmic reticulum (ER) lumen. This catalytic activity is required for maintaining ER structure and for lipid droplets (LDs) biogenesis, which are lipid storage organelles involved in maintaining lipid and energy homeostasis. Required for lipid droplet accumulation in liver and intestine during embryogenesis. May directly bind to diacylglycerol (DAGs) and triacylglycerol, which is also important for LD biogenesis. May support directional budding of nacent LDs from the ER into the cytosol by reducing DAG levels at sites of LD formation. May play a role in the regulation of cell morphology, ER morphology and cytoskeletal organization. The protein is Acyl-coenzyme A diphosphatase FITM2 of Danio rerio (Zebrafish).